We begin with the raw amino-acid sequence, 418 residues long: Putative ion-transport protein YfeO (418 aa).

Transmembrane regions (helical) follow at residues 9 to 31 (MLLL…IVVM), 55 to 77 (SPLW…IRFS), 90 to 112 (LIGA…LGLA), 122 to 140 (PIMT…RLLP), 147 to 169 (WTIL…AALI), 189 to 211 (PLMA…FSLP), 223 to 244 (ILSG…VWCL), 259 to 281 (LVLG…VSLF), 301 to 323 (YFLL…FRGG), 343 to 363 (VPAV…VLVV), and 376 to 398 (VVVP…WLLL).

Belongs to the chloride channel (TC 2.A.49) family.

Its subcellular location is the cell membrane. The polypeptide is Putative ion-transport protein YfeO (yfeO) (Escherichia coli O157:H7).